The sequence spans 153 residues: Small ribosomal subunit protein uS5 (153 aa).

Residues 15–78 form the S5 DRBM domain; sequence FQEVVVNIGR…DDAFKNLIHV (64 aa).

It belongs to the universal ribosomal protein uS5 family. As to quaternary structure, part of the 30S ribosomal subunit. Contacts proteins S4 and S8.

In terms of biological role, with S4 and S12 plays an important role in translational accuracy. Located at the back of the 30S subunit body where it stabilizes the conformation of the head with respect to the body. The protein is Small ribosomal subunit protein uS5 of Helicobacter pylori (strain P12).